Reading from the N-terminus, the 542-residue chain is Sterile alpha motif domain-containing protein 11 (542 aa).

A disordered region spans residues 268–364 (LLALPPQGPP…GRGLLSGSTL (97 aa)). Over residues 273 to 285 (PQGPPGPGPPIPP) the composition is skewed to pro residues. Position 342 is a phosphothreonine (T342). The region spanning 404 to 469 (WTVDDVCNFV…AQVAKRLGRV (66 aa)) is the SAM domain. Residues 486-542 (LQAPELSPGHQPLSPATTTSPYEGTHLPTGQASPKQENGSGTIALLSGAPDPSQLLQ) are disordered. The residue at position 499 (S499) is a Phosphoserine. The span at 499 to 526 (SPATTTSPYEGTHLPTGQASPKQENGSG) shows a compositional bias: polar residues.

In terms of assembly, self-associates. Component of a Polycomb group (PcG) multiprotein PRC1-like complex. Interacts with SAMD7 and PHC2. As to expression, expressed in the outer nuclear layer of rod photoreceptors in the retina (at protein level). Predominantly expressed in retinal photoreceptors and pineal gland.

It is found in the nucleus. Component of a Polycomb group (PcG) multiprotein PRC1-like complex, essential for establishing rod photoreceptor cell identity and function by silencing nonrod gene expression in developing rod photoreceptor cells. The protein is Sterile alpha motif domain-containing protein 11 (Samd11) of Mus musculus (Mouse).